The chain runs to 368 residues: Zinc finger protein 24 (368 aa).

A Glycyl lysine isopeptide (Lys-Gly) (interchain with G-Cter in SUMO2) cross-link involves residue lysine 22. Lysine 27 participates in a covalent cross-link: Glycyl lysine isopeptide (Lys-Gly) (interchain with G-Cter in SUMO1); alternate. Residue lysine 27 forms a Glycyl lysine isopeptide (Lys-Gly) (interchain with G-Cter in SUMO2); alternate linkage. Residues 52-134 (RQRFRQFGYQ…TVLEDLESEL (83 aa)) form the SCAN box domain. Phosphoserine occurs at positions 132 and 142. Glycyl lysine isopeptide (Lys-Gly) (interchain with G-Cter in SUMO2) cross-links involve residues lysine 147, lysine 177, and lysine 236. The C2H2-type 1 zinc-finger motif lies at 251–273 (HICDECGKHFSQGSALILHQRIH). Residues 251–301 (HICDECGKHFSQGSALILHQRIHSGEKPYGCVECGKAFSRSSILVQHQRVH) form a necessary and sufficient for nuclear localization region. Residue serine 274 is modified to Phosphoserine. Glycyl lysine isopeptide (Lys-Gly) (interchain with G-Cter in SUMO2) cross-links involve residues lysine 277 and lysine 286. 3 C2H2-type zinc fingers span residues 279-301 (YGCVECGKAFSRSSILVQHQRVH), 307-329 (YKCLECGKAFSQNSGLINHQRIH), and 335-357 (YECVQCGKSYSQSSNLFRHQRRH). Position 292 is a phosphoserine (serine 292). Residue tyrosine 335 is modified to Phosphotyrosine. Residues lysine 361 and lysine 367 each participate in a glycyl lysine isopeptide (Lys-Gly) (interchain with G-Cter in SUMO2) cross-link.

The protein belongs to the krueppel C2H2-type zinc-finger protein family. Post-translationally, sumoylated. In terms of tissue distribution, expressed in many tissues except in heart.

It is found in the nucleus. In terms of biological role, transcription factor required for myelination of differentiated oligodendrocytes. Required for the conversion of oligodendrocytes from the premyelinating to the myelinating state. In the developing central nervous system (CNS), involved in the maintenance in the progenitor stage by promoting the cell cycle. Specifically binds to the 5'-TCAT-3' DNA sequence. Has transcription repressor activity in vitro. This Homo sapiens (Human) protein is Zinc finger protein 24 (ZNF24).